Here is a 539-residue protein sequence, read N- to C-terminus: Propionyl-CoA carboxylase beta chain, mitochondrial (539 aa).

Residues 1-28 (MAAALRVAAVGARLSVLASGLRAAVRSL) constitute a mitochondrion transit peptide. The 259-residue stretch at 32-290 (ATSVNERIEN…SSQDPAPVRE (259 aa)) folds into the CoA carboxyltransferase N-terminal domain. The segment at 32–533 (ATSVNERIEN…SKKVQRPWRK (502 aa)) is carboxyltransferase. Ser-71 carries the post-translational modification Phosphoserine. At Lys-99 the chain carries N6-acetyllysine; alternate. Residue Lys-99 is modified to N6-succinyllysine; alternate. Lys-248 carries the N6-succinyllysine modification. Positions 294–533 (PSDRLVPELD…SKKVQRPWRK (240 aa)) constitute a CoA carboxyltransferase C-terminal domain. Residues 325–358 (DEREFFEIMPNYAKNIIVGFARMNGRTVGIVGNQ) are acyl-CoA binding. 2 positions are modified to N6-acetyllysine; alternate: Lys-474 and Lys-489. N6-succinyllysine; alternate occurs at positions 474 and 489.

Belongs to the AccD/PCCB family. As to quaternary structure, the holoenzyme is a dodecamer composed of 6 PCCA/alpha subunits and 6 PCCB/beta subunits.

Its subcellular location is the mitochondrion matrix. The enzyme catalyses propanoyl-CoA + hydrogencarbonate + ATP = (S)-methylmalonyl-CoA + ADP + phosphate + H(+). The catalysed reaction is butanoyl-CoA + hydrogencarbonate + ATP = (2S)-ethylmalonyl-CoA + ADP + phosphate + H(+). Its pathway is metabolic intermediate metabolism; propanoyl-CoA degradation; succinyl-CoA from propanoyl-CoA: step 1/3. In terms of biological role, this is one of the 2 subunits of the biotin-dependent propionyl-CoA carboxylase (PCC), a mitochondrial enzyme involved in the catabolism of odd chain fatty acids, branched-chain amino acids isoleucine, threonine, methionine, and valine and other metabolites. Propionyl-CoA carboxylase catalyzes the carboxylation of propionyl-CoA/propanoyl-CoA to D-methylmalonyl-CoA/(S)-methylmalonyl-CoA. Within the holoenzyme, the alpha subunit catalyzes the ATP-dependent carboxylation of the biotin carried by the biotin carboxyl carrier (BCC) domain, while the beta subunit then transfers the carboxyl group from carboxylated biotin to propionyl-CoA. Propionyl-CoA carboxylase also significantly acts on butyryl-CoA/butanoyl-CoA, which is converted to ethylmalonyl-CoA/(2S)-ethylmalonyl-CoA at a much lower rate. Other alternative minor substrates include (2E)-butenoyl-CoA/crotonoyl-CoA. This chain is Propionyl-CoA carboxylase beta chain, mitochondrial, found in Homo sapiens (Human).